The sequence spans 452 residues: Aspartyl/glutamyl-tRNA(Asn/Gln) amidotransferase subunit B (452 aa).

It belongs to the GatB/GatE family. GatB subfamily. In terms of assembly, heterotrimer of A, B and C subunits.

It catalyses the reaction L-glutamyl-tRNA(Gln) + L-glutamine + ATP + H2O = L-glutaminyl-tRNA(Gln) + L-glutamate + ADP + phosphate + H(+). It carries out the reaction L-aspartyl-tRNA(Asn) + L-glutamine + ATP + H2O = L-asparaginyl-tRNA(Asn) + L-glutamate + ADP + phosphate + 2 H(+). Allows the formation of correctly charged Asn-tRNA(Asn) or Gln-tRNA(Gln) through the transamidation of misacylated Asp-tRNA(Asn) or Glu-tRNA(Gln) in organisms which lack either or both of asparaginyl-tRNA or glutaminyl-tRNA synthetases. The reaction takes place in the presence of glutamine and ATP through an activated phospho-Asp-tRNA(Asn) or phospho-Glu-tRNA(Gln). The protein is Aspartyl/glutamyl-tRNA(Asn/Gln) amidotransferase subunit B of Methanosphaera stadtmanae (strain ATCC 43021 / DSM 3091 / JCM 11832 / MCB-3).